The chain runs to 158 residues: 3-hydroxyacyl-[acyl-carrier-protein] dehydratase FabZ (158 aa).

The active site involves H60.

It belongs to the thioester dehydratase family. FabZ subfamily.

Its subcellular location is the cytoplasm. It carries out the reaction a (3R)-hydroxyacyl-[ACP] = a (2E)-enoyl-[ACP] + H2O. Its function is as follows. Involved in unsaturated fatty acids biosynthesis. Catalyzes the dehydration of short chain beta-hydroxyacyl-ACPs and long chain saturated and unsaturated beta-hydroxyacyl-ACPs. This Zymomonas mobilis subsp. mobilis (strain ATCC 31821 / ZM4 / CP4) protein is 3-hydroxyacyl-[acyl-carrier-protein] dehydratase FabZ.